A 367-amino-acid chain; its full sequence is WD repeat-containing protein 31 (367 aa).

WD repeat units follow at residues 53–90, 94–132, 137–175, 179–217, 221–264, 269–311, and 315–353; these read AFQE…AYNW, NVVK…MWDL, QPRQ…LWDV, QSVE…LWDS, QVAH…LWDL, NRIC…IWNQ, and ACLF…LLRM.

The sequence is that of WD repeat-containing protein 31 (WDR31) from Homo sapiens (Human).